Consider the following 255-residue polypeptide: Anamorsin homolog (255 aa).

An N-terminal SAM-like domain region spans residues 1–163 (MPKETLVVSK…VRPNWKSKTD (163 aa)). The segment at 164–185 (KKSPSMIDAAPIDGYISKAPDY) is linker. Residues Cys188, Cys195, Cys198, and Cys200 each coordinate [2Fe-2S] cluster. The interval 188–200 (CSTKPRACANCTC) is fe-S binding site A. Residues Cys224, Cys227, Cys235, and Cys238 each contribute to the [4Fe-4S] cluster site. 2 short sequence motifs (cx2C motif) span residues 224 to 227 (CGNC) and 235 to 238 (CESC). A fe-S binding site B region spans residues 224–238 (CGNCYLGDAFRCESC).

Belongs to the anamorsin family. In terms of assembly, monomer. Requires [2Fe-2S] cluster as cofactor. [4Fe-4S] cluster serves as cofactor.

It is found in the cytoplasm. Its subcellular location is the mitochondrion intermembrane space. Its function is as follows. Component of the cytosolic iron-sulfur (Fe-S) protein assembly (CIA) machinery. Required for the maturation of extramitochondrial Fe-S proteins. Part of an electron transfer chain functioning in an early step of cytosolic Fe-S biogenesis, facilitating the de novo assembly of a [4Fe-4S] cluster on the cytosolic Fe-S scaffold complex. Electrons are transferred from NADPH via a FAD- and FMN-containing diflavin oxidoreductase. Together with the diflavin oxidoreductase, also required for the assembly of the diferric tyrosyl radical cofactor of ribonucleotide reductase (RNR), probably by providing electrons for reduction during radical cofactor maturation in the catalytic small subunit. In Theileria annulata, this protein is Anamorsin homolog.